Consider the following 223-residue polypeptide: Endonuclease NucS (223 aa).

This sequence belongs to the NucS endonuclease family.

The protein resides in the cytoplasm. In terms of biological role, cleaves both 3' and 5' ssDNA extremities of branched DNA structures. This is Endonuclease NucS from Mycolicibacterium vanbaalenii (strain DSM 7251 / JCM 13017 / BCRC 16820 / KCTC 9966 / NRRL B-24157 / PYR-1) (Mycobacterium vanbaalenii).